The sequence spans 474 residues: UDP-N-acetylmuramate--L-alanine ligase (474 aa).

Residue 119 to 125 (GTHGKTT) participates in ATP binding.

This sequence belongs to the MurCDEF family.

It localises to the cytoplasm. It catalyses the reaction UDP-N-acetyl-alpha-D-muramate + L-alanine + ATP = UDP-N-acetyl-alpha-D-muramoyl-L-alanine + ADP + phosphate + H(+). The protein operates within cell wall biogenesis; peptidoglycan biosynthesis. Functionally, cell wall formation. This Jannaschia sp. (strain CCS1) protein is UDP-N-acetylmuramate--L-alanine ligase.